Consider the following 270-residue polypeptide: Nuclease P1 (270 aa).

5 residues coordinate a divalent metal cation: W1, H6, H15, D45, and H60. Residue 1 to 6 (WGALGH) coordinates substrate. Substrate-binding positions include 45 to 51 (DEYRLTS), 60 to 63 (HFID), and 73 to 78 (NVDYER). 2 cysteine pairs are disulfide-bonded: C72–C217 and C80–C85. N-linked (GlcNAc...) asparagine glycosylation occurs at N92. A divalent metal cation contacts are provided by H116, D120, and H126. The tract at residues 116-164 (HFIGDMTQPLHDEAYAVGGNKINVTFDGYHDNLHSDWDTYMPQKLIGGH) is substrate binding. A glycan (N-linked (GlcNAc...) asparagine) is linked at N138. A divalent metal cation-binding residues include H149 and D153. N-linked (GlcNAc...) asparagine glycosylation is found at N184 and N197.

The protein belongs to the nuclease type I family. It depends on Zn(2+) as a cofactor.

The protein localises to the secreted. It carries out the reaction Endonucleolytic cleavage to 5'-phosphomononucleotide and 5'-phosphooligonucleotide end-products.. Its function is as follows. Hydrolyzes only single-stranded DNA and RNA without apparent specificity for bases. This is Nuclease P1 from Penicillium citrinum.